The chain runs to 178 residues: Actin-related protein 2/3 complex subunit 3 (178 aa).

Residue K29 forms a Glycyl lysine isopeptide (Lys-Gly) (interchain with G-Cter in ubiquitin) linkage.

It belongs to the ARPC3 family. As to quaternary structure, component of the Arp2/3 complex composed of ARP2, ARP3, ARC40/p41-ARC, ARC35/p34-ARC, ARC18/p21-ARC, ARC19/p20-ARC and ARC16/p16-ARC.

It is found in the cytoplasm. It localises to the cytoskeleton. Its function is as follows. Functions as a component of the Arp2/3 complex which is involved in regulation of actin polymerization and together with an activating nucleation-promoting factor (NPF) mediates the formation of branched actin networks. This chain is Actin-related protein 2/3 complex subunit 3 (ARC18), found in Saccharomyces cerevisiae (strain ATCC 204508 / S288c) (Baker's yeast).